A 391-amino-acid polypeptide reads, in one-letter code: GTPase HflX (391 aa).

Residues 162–181 (LAQQRGGAKGTRGASRGAGE) are disordered. The 170-residue stretch at 222–391 (KIGAIVGYTN…KITDIIIFDK (170 aa)) folds into the Hflx-type G domain. GTP contacts are provided by residues 228 to 235 (GYTNAGKS), 253 to 257 (FATLD), 278 to 281 (DTVG), 344 to 347 (NKMD), and 369 to 371 (SVT). Mg(2+)-binding residues include serine 235 and threonine 255.

It belongs to the TRAFAC class OBG-HflX-like GTPase superfamily. HflX GTPase family. As to quaternary structure, monomer. Associates with the 50S ribosomal subunit. Mg(2+) serves as cofactor.

It is found in the cytoplasm. Functionally, GTPase that associates with the 50S ribosomal subunit and may have a role during protein synthesis or ribosome biogenesis. The polypeptide is GTPase HflX (Treponema denticola (strain ATCC 35405 / DSM 14222 / CIP 103919 / JCM 8153 / KCTC 15104)).